Reading from the N-terminus, the 468-residue chain is Probable Xaa-Pro aminopeptidase PEPP (468 aa).

The Mn(2+) site is built by D264, D275, E398, and E438.

It belongs to the peptidase M24B family. Mn(2+) serves as cofactor.

It catalyses the reaction Release of any N-terminal amino acid, including proline, that is linked to proline, even from a dipeptide or tripeptide.. Its function is as follows. Catalyzes the removal of a penultimate prolyl residue from the N-termini of peptides. This Paracoccidioides brasiliensis (strain Pb18) protein is Probable Xaa-Pro aminopeptidase PEPP (PEPP).